Consider the following 317-residue polypeptide: tRNA dimethylallyltransferase (317 aa).

ATP is bound at residue 14–21; the sequence is GPTAVGKT. 16-21 is a substrate binding site; it reads TAVGKT. The interaction with substrate tRNA stretch occupies residues 39 to 42; the sequence is DSMQ.

This sequence belongs to the IPP transferase family. As to quaternary structure, monomer. Mg(2+) serves as cofactor.

The enzyme catalyses adenosine(37) in tRNA + dimethylallyl diphosphate = N(6)-dimethylallyladenosine(37) in tRNA + diphosphate. In terms of biological role, catalyzes the transfer of a dimethylallyl group onto the adenine at position 37 in tRNAs that read codons beginning with uridine, leading to the formation of N6-(dimethylallyl)adenosine (i(6)A). The polypeptide is tRNA dimethylallyltransferase (Bacillus cereus (strain ATCC 10987 / NRS 248)).